A 309-amino-acid polypeptide reads, in one-letter code: Homoserine O-succinyltransferase (309 aa).

The active-site Acyl-thioester intermediate is the Cys142. The substrate site is built by Lys163 and Ser192. The Proton acceptor role is filled by His235. Residue Glu237 is part of the active site. Arg249 is a substrate binding site.

This sequence belongs to the MetA family. In terms of assembly, homodimer.

Its subcellular location is the cytoplasm. The catalysed reaction is L-homoserine + succinyl-CoA = O-succinyl-L-homoserine + CoA. The protein operates within amino-acid biosynthesis; L-methionine biosynthesis via de novo pathway; O-succinyl-L-homoserine from L-homoserine: step 1/1. In terms of biological role, transfers a succinyl group from succinyl-CoA to L-homoserine, forming succinyl-L-homoserine. The chain is Homoserine O-succinyltransferase from Escherichia coli O139:H28 (strain E24377A / ETEC).